Reading from the N-terminus, the 562-residue chain is Potassium-transporting ATPase potassium-binding subunit (562 aa).

12 consecutive transmembrane segments (helical) span residues 5-25, 63-83, 132-152, 175-195, 250-270, 279-299, 327-347, 356-376, 379-399, 416-436, 483-503, and 526-546; these read AFLL…PLGS, AAAI…LLMA, GLTV…FALI, LYVL…QGVL, LSNI…CFAF, QGHA…AVVM, FGVL…TGAV, ALGG…FGGV, GLYG…LMIG, MTAL…ALAL, VLLA…VLAI, and LFIG…FIPA.

This sequence belongs to the KdpA family. In terms of assembly, the system is composed of three essential subunits: KdpA, KdpB and KdpC.

Its subcellular location is the cell inner membrane. Part of the high-affinity ATP-driven potassium transport (or Kdp) system, which catalyzes the hydrolysis of ATP coupled with the electrogenic transport of potassium into the cytoplasm. This subunit binds the periplasmic potassium ions and delivers the ions to the membrane domain of KdpB through an intramembrane tunnel. The sequence is that of Potassium-transporting ATPase potassium-binding subunit from Pectobacterium carotovorum subsp. carotovorum (strain PC1).